The primary structure comprises 309 residues: D-allose kinase (309 aa).

ATP-binding positions include 10–17 and 142–149; these read GVDMGATH and GMGFAVWM.

It belongs to the ROK (NagC/XylR) family.

It carries out the reaction D-allose + ATP = D-allose 6-phosphate + ADP + H(+). Its pathway is carbohydrate degradation; D-allose degradation. Catalyzes the phosphorylation of D-allose to D-allose 6-phosphate. Also has low level glucokinase activity in vitro. This Escherichia coli (strain K12) protein is D-allose kinase.